A 483-amino-acid chain; its full sequence is Pentatricopeptide repeat-containing protein At5g18950 (483 aa).

PPR repeat units lie at residues 144-178 (EPTL…GISS), 179-213 (SVVT…EFDS), 218-246 (CLIR…GLDP), 247-281 (GQYV…NHFP), 282-316 (SMYI…GYAP), 317-351 (DRVV…GMRP), 352-386 (NEFA…GYGG), 387-421 (TMLS…GVTP), and 422-456 (NAIT…GLKP).

Belongs to the PPR family. P subfamily.

This Arabidopsis thaliana (Mouse-ear cress) protein is Pentatricopeptide repeat-containing protein At5g18950.